Consider the following 320-residue polypeptide: Acetyl-coenzyme A carboxylase carboxyl transferase subunit alpha (320 aa).

Residues 34–288 form the CoA carboxyltransferase C-terminal domain; it reads RLEEALEAAR…GEALERVLAG (255 aa).

The protein belongs to the AccA family. As to quaternary structure, acetyl-CoA carboxylase is a heterohexamer composed of biotin carboxyl carrier protein (AccB), biotin carboxylase (AccC) and two subunits each of ACCase subunit alpha (AccA) and ACCase subunit beta (AccD).

Its subcellular location is the cytoplasm. It catalyses the reaction N(6)-carboxybiotinyl-L-lysyl-[protein] + acetyl-CoA = N(6)-biotinyl-L-lysyl-[protein] + malonyl-CoA. Its pathway is lipid metabolism; malonyl-CoA biosynthesis; malonyl-CoA from acetyl-CoA: step 1/1. Its function is as follows. Component of the acetyl coenzyme A carboxylase (ACC) complex. First, biotin carboxylase catalyzes the carboxylation of biotin on its carrier protein (BCCP) and then the CO(2) group is transferred by the carboxyltransferase to acetyl-CoA to form malonyl-CoA. This chain is Acetyl-coenzyme A carboxylase carboxyl transferase subunit alpha, found in Rubrobacter xylanophilus (strain DSM 9941 / JCM 11954 / NBRC 16129 / PRD-1).